We begin with the raw amino-acid sequence, 478 residues long: Leukotoxin secretion protein D (478 aa).

Residues 1–77 (MKIWLSGIYE…LAVAIVLASV (77 aa)) are Cytoplasmic-facing. A helical membrane pass occupies residues 78-98 (SKVEIVATAPGKLTFSGRSKE). Residues 99–478 (IKPIENTIVQ…ESVTESLRER (380 aa)) are Periplasmic-facing.

The protein belongs to the membrane fusion protein (MFP) (TC 8.A.1) family.

The protein resides in the cell inner membrane. Involved in the transport of the Leukotoxin. This is Leukotoxin secretion protein D (lktD) from Pasteurella haemolytica-like sp. (strain 5943B).